A 170-amino-acid polypeptide reads, in one-letter code: Protein SprT (170 aa).

A SprT-like domain is found at 25–165 (SEQFFDRTFA…QYCKGRLEPV (141 aa)). His-78 provides a ligand contact to Zn(2+). Glu-79 is an active-site residue. His-82 is a binding site for Zn(2+).

Belongs to the SprT family. Zn(2+) is required as a cofactor.

The protein resides in the cytoplasm. The polypeptide is Protein SprT (Actinobacillus succinogenes (strain ATCC 55618 / DSM 22257 / CCUG 43843 / 130Z)).